A 414-amino-acid chain; its full sequence is MKQIRVELINTGTEILLGSIVNTNAAWLGNRLFEAGFRVGRVTVVPDGYAINEAMRESARRADIVIVSGGLGPTSDDVTREALCDVCGVDMHRDEHVAEWLKSYFERRGIPIAECNFKQAMVPDGAAVLENSNGTAPGLVMPASGSLPMFILLPGPPAELKPMVEHSVMPLLEDLADEDIPHLRVFRLVGIGESDLQELVDGSLHQVEGLEVAYCARVGEVDVRLVGSEVALKQGEARLRILAGAYVLAPAGASLEKAVVCHLAQQDLKAATAESCTGGLIAKRITDVPGASGVFEFGWVTYADRAKTEMLGVPENVLKRYGAVSEPVVKAMAEGALERSGADVAVAVSGIAGPGGGTPEKPVGTVWLAWAFRGGETRTEMMLYPRDRSSFRKMVSQRALAGLLDARRKEPVTE.

It belongs to the CinA family.

In Akkermansia muciniphila (strain ATCC BAA-835 / DSM 22959 / JCM 33894 / BCRC 81048 / CCUG 64013 / CIP 107961 / Muc), this protein is CinA-like protein.